Reading from the N-terminus, the 92-residue chain is UPF0223 protein Sez_0908 (92 aa).

Belongs to the UPF0223 family.

The protein is UPF0223 protein Sez_0908 of Streptococcus equi subsp. zooepidemicus (strain MGCS10565).